The chain runs to 136 residues: Protein Tat (136 aa).

The tract at residues 22 to 37 (CTNCYCKKCCFHCPVC) is cysteine-rich. Residues 38–48 (FTKKALGISYG) form a core region. Residues 48–57 (GRKRRGRKSA) are compositionally biased toward basic residues. Residues 48 to 136 (GRKRRGRKSA…SGSSGSACKH (89 aa)) form a disordered region. The short motif at 49–55 (RKRRGRK) is the Nuclear localization signal, and RNA-binding (TAR) element. Positions 58 to 73 (VHSTNNQDPVRQQSLP) are enriched in polar residues. The span at 104 to 120 (SSVSSGRTSGTSSSGYT) shows a compositional bias: low complexity. The span at 123–136 (FKTSSGSSGSACKH) shows a compositional bias: polar residues.

The protein belongs to the lentiviruses Tat family. In terms of assembly, interacts with host CCNT1. Associates with the P-TEFb complex composed at least of Tat, P-TEFb (CDK9 and CCNT1), TAR RNA, RNA Pol II. Interacts with CCNT2; the resulting complex is unable to bind to TAR RNA.

Its subcellular location is the host nucleus. It is found in the host nucleolus. Its function is as follows. Transcriptional activator that increases RNA Pol II processivity, thereby increasing the level of full-length viral transcripts. Recognizes a hairpin structure at the 5'-LTR of the nascent viral mRNAs referred to as the transactivation responsive RNA element (TAR) and recruits the cyclin T1-CDK9 complex (P-TEFb complex) that will in turn hyperphosphorylate the RNA polymerase II to allow efficient elongation. The CDK9 component of P-TEFb and other Tat-activated kinases hyperphosphorylate the C-terminus of RNA Pol II that becomes stabilized and much more processive. Functionally, extracellular circulating Tat can be endocytosed by surrounding uninfected cells via the binding to several surface receptors. Endosomal low pH allows Tat to cross the endosome membrane to enter the cytosol and eventually further translocate into the nucleus, thereby inducing severe cell dysfunctions ranging from cell activation to cell death. Through. The polypeptide is Protein Tat (Simian immunodeficiency virus (isolate TAN1) (SIV-cpz)).